Consider the following 243-residue polypeptide: 1-(5-phosphoribosyl)-5-[(5-phosphoribosylamino)methylideneamino] imidazole-4-carboxamide isomerase (243 aa).

The active-site Proton acceptor is Asp-14. Asp-135 (proton donor) is an active-site residue.

It belongs to the HisA/HisF family.

Its subcellular location is the cytoplasm. The enzyme catalyses 1-(5-phospho-beta-D-ribosyl)-5-[(5-phospho-beta-D-ribosylamino)methylideneamino]imidazole-4-carboxamide = 5-[(5-phospho-1-deoxy-D-ribulos-1-ylimino)methylamino]-1-(5-phospho-beta-D-ribosyl)imidazole-4-carboxamide. It functions in the pathway amino-acid biosynthesis; L-histidine biosynthesis; L-histidine from 5-phospho-alpha-D-ribose 1-diphosphate: step 4/9. The sequence is that of 1-(5-phosphoribosyl)-5-[(5-phosphoribosylamino)methylideneamino] imidazole-4-carboxamide isomerase from Rubrobacter xylanophilus (strain DSM 9941 / JCM 11954 / NBRC 16129 / PRD-1).